We begin with the raw amino-acid sequence, 403 residues long: Zinc finger CCHC domain-containing protein 3 (403 aa).

Residues 1–158 (MATGGGAEEE…PLQDEPAAAA (158 aa)) form a disordered region. Composition is skewed to basic and acidic residues over residues 26–38 (ARGE…REKM) and 47–65 (LAEK…REEE). Residues 67-79 (GGGGGSAGLGGPA) show a composition bias toward gly residues. Residues 95–121 (GDPKGRRRDPAGEAVDPRKKKGAAEAG) show a composition bias toward basic and acidic residues. The span at 128–139 (AAAAAMATPARP) shows a compositional bias: low complexity. Phosphotyrosine is present on Tyr201. 3 CCHC-type zinc fingers span residues 335-350 (CFKC…SCTQ), 352-368 (RCFR…YCRK), and 372-387 (CNLC…QCPK).

Interacts with CGAS. Interacts with RIGI. Interacts with IFIH1/MDA5.

It localises to the cytoplasm. Functionally, nucleic acid-binding protein involved in innate immune response to DNA and RNA viruses. Binds DNA and RNA in the cytoplasm and acts by promoting recognition of viral nucleic acids by virus sensors, such as RIGI, IFIH1/MDA5 and CGAS. Acts as a co-sensor for recognition of double-stranded DNA (dsDNA) by cGAS in the cytoplasm, thereby playing a role in innate immune response to cytosolic dsDNA and DNA virus. Binds dsDNA and probably acts by promoting sensing of dsDNA by CGAS, leading to enhance CGAS oligomerization and activation. Promotes sensing of viral RNA by RIGI-like receptors proteins RIGI and IFIH1/MDA5 via two mechanisms: binds double-stranded RNA (dsRNA), enhancing the binding of RIGI and IFIH1/MDA5 to dsRNA and promotes 'Lys-63'-linked ubiquitination and subsequent activation of RIGI and IFIH1/MDA5. The sequence is that of Zinc finger CCHC domain-containing protein 3 from Homo sapiens (Human).